A 313-amino-acid chain; its full sequence is Pantothenate synthetase (313 aa).

Position 43–50 (methionine 43–histidine 50) interacts with ATP. Residue histidine 50 is the Proton donor of the active site. Residue glutamine 75 coordinates (R)-pantoate. Glutamine 75 contacts beta-alanine. Residue glycine 161–aspartate 164 coordinates ATP. Residue glutamine 167 coordinates (R)-pantoate. ATP contacts are provided by residues valine 190 and leucine 198–arginine 201.

The protein belongs to the pantothenate synthetase family. Homodimer.

It is found in the cytoplasm. The enzyme catalyses (R)-pantoate + beta-alanine + ATP = (R)-pantothenate + AMP + diphosphate + H(+). It functions in the pathway cofactor biosynthesis; (R)-pantothenate biosynthesis; (R)-pantothenate from (R)-pantoate and beta-alanine: step 1/1. Functionally, catalyzes the condensation of pantoate with beta-alanine in an ATP-dependent reaction via a pantoyl-adenylate intermediate. In Mycobacterium sp. (strain JLS), this protein is Pantothenate synthetase.